The sequence spans 519 residues: 4-nitrophenol 2-monooxygenase, oxygenase component (519 aa).

This sequence belongs to the FADH(2)-utilizing monooxygenase family. In terms of assembly, homotetramer. 4-nitrophenol 2-monooxygenase complex consists of an oxygenase component NphA1 and a flavin reductase component NphA2. The cofactor is FAD.

The enzyme catalyses 4-nitrophenol + NADH + O2 + H(+) = 4-nitrocatechol + NAD(+) + H2O. With respect to regulation, partially inhibited by concentrations of FAD above 10 uM and completely inhibited by concentrations above 50 uM. Utilizes the flavins supplied by NphA2 to catalyze the degradation of 4-nitrophenol (4-NP) via 4-nitrocatechol (4-NC) which is used as the sole carbon, nitrogen, and energy source. Can also degrade phenol and 4-chlorophenol as rapidly as 4-NP. This chain is 4-nitrophenol 2-monooxygenase, oxygenase component (nphA1), found in Rhodococcus sp.